The following is a 403-amino-acid chain: Tyrosine--tRNA ligase (403 aa).

The short motif at 45–54 is the 'HIGH' region element; that stretch reads PTAPDLHLGH. Residues 229–233 carry the 'KMSKS' region motif; sequence KMSKS. Residue lysine 232 participates in ATP binding. The S4 RNA-binding domain maps to 341 to 402; it reads VLLGRLLAEA…GKRRFARIVF (62 aa).

It belongs to the class-I aminoacyl-tRNA synthetase family. TyrS type 2 subfamily. As to quaternary structure, homodimer.

The protein localises to the cytoplasm. The catalysed reaction is tRNA(Tyr) + L-tyrosine + ATP = L-tyrosyl-tRNA(Tyr) + AMP + diphosphate + H(+). Catalyzes the attachment of tyrosine to tRNA(Tyr) in a two-step reaction: tyrosine is first activated by ATP to form Tyr-AMP and then transferred to the acceptor end of tRNA(Tyr). This Geobacter metallireducens (strain ATCC 53774 / DSM 7210 / GS-15) protein is Tyrosine--tRNA ligase.